Here is a 282-residue protein sequence, read N- to C-terminus: Mitochondrial outer membrane protein porin (282 aa).

It belongs to the eukaryotic mitochondrial porin family.

It localises to the mitochondrion outer membrane. Functionally, forms a channel through the cell membrane that allows diffusion of small hydrophilic molecules. The channel adopts an open conformation at low or zero membrane potential and a closed conformation at potentials above 30-40 mV. The open state has a weak anion selectivity whereas the closed state is cation-selective. This Candida albicans (strain SC5314 / ATCC MYA-2876) (Yeast) protein is Mitochondrial outer membrane protein porin (POR1).